We begin with the raw amino-acid sequence, 217 residues long: GTP-binding protein yptV2 (217 aa).

Residue 20–27 participates in GTP binding; sequence GDSGVGKS. The short motif at 42–50 is the Effector region element; it reads FITTIGIDF. GTP-binding positions include 68–72 and 126–129; these read DTAGQ and NKLD. Positions 198-217 are disordered; the sequence is QPVRLTSGSPSPAQGKSCCR. Residues 201 to 211 are compositionally biased toward polar residues; sequence RLTSGSPSPAQ. 2 S-geranylgeranyl cysteine lipidation sites follow: cysteine 215 and cysteine 216.

The protein belongs to the small GTPase superfamily. Rab family.

The protein resides in the cell membrane. Functionally, protein transport. Probably involved in vesicular traffic. The polypeptide is GTP-binding protein yptV2 (YPTV2) (Volvox carteri (Green alga)).